The following is a 65-amino-acid chain: Large ribosomal subunit protein bL35 (65 aa).

This sequence belongs to the bacterial ribosomal protein bL35 family.

This is Large ribosomal subunit protein bL35 from Aeromonas salmonicida (strain A449).